Reading from the N-terminus, the 371-residue chain is uncharacterized protein (371 aa).

The 4Fe-4S ferredoxin-type domain maps to 110 to 140 (MEKFIDFDRCNKCGECARKICKAKWTPLNYL).

This is an uncharacterized protein from Methanocaldococcus jannaschii (strain ATCC 43067 / DSM 2661 / JAL-1 / JCM 10045 / NBRC 100440) (Methanococcus jannaschii).